Consider the following 687-residue polypeptide: DNA-directed RNA polymerase subunit beta' (687 aa).

4 residues coordinate Zn(2+): C69, C71, C87, and C90. Mg(2+) contacts are provided by D492, D494, and D496.

The protein belongs to the RNA polymerase beta' chain family. RpoC1 subfamily. As to quaternary structure, in plastids the minimal PEP RNA polymerase catalytic core is composed of four subunits: alpha, beta, beta', and beta''. When a (nuclear-encoded) sigma factor is associated with the core the holoenzyme is formed, which can initiate transcription. The cofactor is Mg(2+). Requires Zn(2+) as cofactor.

It localises to the plastid. The protein localises to the chloroplast. The enzyme catalyses RNA(n) + a ribonucleoside 5'-triphosphate = RNA(n+1) + diphosphate. In terms of biological role, DNA-dependent RNA polymerase catalyzes the transcription of DNA into RNA using the four ribonucleoside triphosphates as substrates. In Silene latifolia (White campion), this protein is DNA-directed RNA polymerase subunit beta'.